The sequence spans 141 residues: Nuclear receptor 2C2-associated protein (141 aa).

Belongs to the NR2C2AP family.

Its subcellular location is the nucleus. Functionally, may act as a repressor of nr2c2-mediated transactivation by suppressing the binding between nr2c2 and its response element in target genes. This Danio rerio (Zebrafish) protein is Nuclear receptor 2C2-associated protein (nr2c2ap).